The sequence spans 393 residues: Probable galacturonosyltransferase-like 8 (393 aa).

At 1 to 4 (MSSR) the chain is on the cytoplasmic side. The chain crosses the membrane as a helical; Signal-anchor for type II membrane protein span at residues 5–25 (FSLTVVCLIALLPFVVGIRLI). The Lumenal segment spans residues 26–393 (PARITSVGDG…SELTDDSSFL (368 aa)). N-linked (GlcNAc...) asparagine glycosylation occurs at N226.

The protein belongs to the glycosyltransferase 8 family.

It is found in the golgi apparatus membrane. The protein operates within glycan metabolism; pectin biosynthesis. May be involved in pectin and/or xylans biosynthesis in cell walls. This chain is Probable galacturonosyltransferase-like 8 (GATL8), found in Arabidopsis thaliana (Mouse-ear cress).